The primary structure comprises 360 residues: Inward rectifier potassium channel 13 (360 aa).

The Cytoplasmic portion of the chain corresponds to 1–50; that stretch reads MDSSNCKVIAPLLSQRYRRMVTKDGHSTLQMDGAQRGLAYLRDAWGILMD. Residues 51 to 77 traverse the membrane as a helical segment; it reads MRWRWMMLVFSASFVVHWLVFAVLWYV. At 78 to 105 the chain is on the extracellular side; that stretch reads LAEMNGDLELDHDAPPENHTICVKYITS. Positions 106 to 122 form an intramembrane region, helical; Pore-forming; sequence FTAAFSFSLETQLTIGY. The Selectivity filter motif lies at 119 to 124; the sequence is TIGYGT. Topologically, residues 123–131 are extracellular; sequence GTMFPSGDC. Residues 132–157 form a helical membrane-spanning segment; that stretch reads PSAIALLAIQMLLGLMLEAFITGAFV. Residues 158-360 lie on the Cytoplasmic side of the membrane; it reads AKIARPKNRA…FQISETGLTE (203 aa). Residue Ser201 is modified to Phosphoserine; by PKC. At Ser287 the chain carries Phosphoserine; by PKA.

This sequence belongs to the inward rectifier-type potassium channel (TC 1.A.2.1) family. KCNJ13 subfamily. In terms of assembly, homotetramer. Interacts with RAB28; the interaction may facilitate cone outer segments phagocytosis. Phosphorylation at Ser-201 by PKC strongly inhibits ionic currents, while phosphorylation at Ser-287 by PKA increases them. As to expression, predominantly expressed in small intestine. Expression is also detected in stomach, kidney, and all central nervous system regions tested with the exception of spinal cord.

It localises to the membrane. It is found in the cell membrane. The enzyme catalyses K(+)(in) = K(+)(out). With respect to regulation, inhibited by Ba(2+) and Cs(+), although sensitivity to those inhibitors is much lower than in other Kir channels. Functionally, inward rectifier potassium channels are characterized by a greater tendency to allow potassium to flow into the cell rather than out of it. Their voltage dependence is regulated by the concentration of extracellular potassium; as external potassium is raised, the voltage range of the channel opening shifts to more positive voltages. The inward rectification is mainly due to the blockage of outward current by internal magnesium. KCNJ13 has a very low single channel conductance, low sensitivity to block by external barium and cesium, and no dependence of its inward rectification properties on the internal blocking particle magnesium. The sequence is that of Inward rectifier potassium channel 13 (KCNJ13) from Homo sapiens (Human).